The primary structure comprises 238 residues: Large ribosomal subunit protein uL1 (238 aa).

The protein belongs to the universal ribosomal protein uL1 family. Part of the 50S ribosomal subunit.

In terms of biological role, binds directly to 23S rRNA. The L1 stalk is quite mobile in the ribosome, and is involved in E site tRNA release. Functionally, protein L1 is also a translational repressor protein, it controls the translation of the L11 operon by binding to its mRNA. The chain is Large ribosomal subunit protein uL1 from Salinispora tropica (strain ATCC BAA-916 / DSM 44818 / JCM 13857 / NBRC 105044 / CNB-440).